A 309-amino-acid chain; its full sequence is Porphobilinogen deaminase (309 aa).

C240 carries the S-(dipyrrolylmethanemethyl)cysteine modification.

It belongs to the HMBS family. Monomer. Dipyrromethane is required as a cofactor.

The catalysed reaction is 4 porphobilinogen + H2O = hydroxymethylbilane + 4 NH4(+). It participates in porphyrin-containing compound metabolism; protoporphyrin-IX biosynthesis; coproporphyrinogen-III from 5-aminolevulinate: step 2/4. In terms of biological role, tetrapolymerization of the monopyrrole PBG into the hydroxymethylbilane pre-uroporphyrinogen in several discrete steps. This is Porphobilinogen deaminase from Lawsonia intracellularis (strain PHE/MN1-00).